A 68-amino-acid polypeptide reads, in one-letter code: Pleurocidin (68 aa).

The signal sequence occupies residues 1–22; that stretch reads MKFTATFLMIAIFVLMVEPGEC. A propeptide spanning residues 48-68 is cleaved from the precursor; the sequence is GDKQELNKRAVDEDPNVIVFE.

This sequence belongs to the pleurocidin family. As to expression, goblet cells.

The protein localises to the secreted. Antimicrobial peptide with potent activity against Gram-positive and Gram-negative bacteria. Activity against E.coli and B.subtilis. Weaker activity against L.mucor, s.marcescens and P.aeruginosa. May play a role in innate host defense. The chain is Pleurocidin (ple2) from Pseudopleuronectes americanus (Winter flounder).